The following is a 349-amino-acid chain: DNA polymerase IV (349 aa).

The region spanning 7 to 188 is the UmuC domain; sequence IIHIDMDYFF…LPVKKLFGVG (182 aa). Residues D11 and D106 each contribute to the Mg(2+) site. E107 is a catalytic residue.

Belongs to the DNA polymerase type-Y family. In terms of assembly, monomer. Mg(2+) serves as cofactor.

Its subcellular location is the cytoplasm. The catalysed reaction is DNA(n) + a 2'-deoxyribonucleoside 5'-triphosphate = DNA(n+1) + diphosphate. Functionally, poorly processive, error-prone DNA polymerase involved in untargeted mutagenesis. Copies undamaged DNA at stalled replication forks, which arise in vivo from mismatched or misaligned primer ends. These misaligned primers can be extended by PolIV. Exhibits no 3'-5' exonuclease (proofreading) activity. May be involved in translesional synthesis, in conjunction with the beta clamp from PolIII. The sequence is that of DNA polymerase IV from Francisella tularensis subsp. holarctica (strain FTNF002-00 / FTA).